The primary structure comprises 121 residues: MARIAGVDVPREKRIVISLTYIYGIGKQTAKEVLAEAGVSEDTRTRDLTEEELGKIREILDRIKVEGDLRREVNLNIKRLIEIGSYRGMRHRRGLPVRGQNTKNNARTRKGPSKTVAGKKK.

A disordered region spans residues 91 to 121 (HRRGLPVRGQNTKNNARTRKGPSKTVAGKKK). The span at 106–121 (ARTRKGPSKTVAGKKK) shows a compositional bias: basic residues.

Belongs to the universal ribosomal protein uS13 family. Part of the 30S ribosomal subunit. Forms a loose heterodimer with protein S19. Forms two bridges to the 50S subunit in the 70S ribosome.

Functionally, located at the top of the head of the 30S subunit, it contacts several helices of the 16S rRNA. In the 70S ribosome it contacts the 23S rRNA (bridge B1a) and protein L5 of the 50S subunit (bridge B1b), connecting the 2 subunits; these bridges are implicated in subunit movement. Contacts the tRNAs in the A and P-sites. The protein is Small ribosomal subunit protein uS13 of Listeria monocytogenes serotype 4b (strain CLIP80459).